The sequence spans 390 residues: Anhydro-N-acetylmuramic acid kinase (390 aa).

Position 9-16 (9-16 (GTSLDGID)) interacts with ATP.

It belongs to the anhydro-N-acetylmuramic acid kinase family.

The catalysed reaction is 1,6-anhydro-N-acetyl-beta-muramate + ATP + H2O = N-acetyl-D-muramate 6-phosphate + ADP + H(+). It participates in amino-sugar metabolism; 1,6-anhydro-N-acetylmuramate degradation. Its pathway is cell wall biogenesis; peptidoglycan recycling. Functionally, catalyzes the specific phosphorylation of 1,6-anhydro-N-acetylmuramic acid (anhMurNAc) with the simultaneous cleavage of the 1,6-anhydro ring, generating MurNAc-6-P. Is required for the utilization of anhMurNAc either imported from the medium or derived from its own cell wall murein, and thus plays a role in cell wall recycling. This is Anhydro-N-acetylmuramic acid kinase from Bacillus cereus (strain ATCC 14579 / DSM 31 / CCUG 7414 / JCM 2152 / NBRC 15305 / NCIMB 9373 / NCTC 2599 / NRRL B-3711).